A 361-amino-acid polypeptide reads, in one-letter code: Histidinol-phosphate aminotransferase (361 aa).

Residue lysine 219 is modified to N6-(pyridoxal phosphate)lysine.

It belongs to the class-II pyridoxal-phosphate-dependent aminotransferase family. Histidinol-phosphate aminotransferase subfamily. Homodimer. Pyridoxal 5'-phosphate serves as cofactor.

The enzyme catalyses L-histidinol phosphate + 2-oxoglutarate = 3-(imidazol-4-yl)-2-oxopropyl phosphate + L-glutamate. The protein operates within amino-acid biosynthesis; L-histidine biosynthesis; L-histidine from 5-phospho-alpha-D-ribose 1-diphosphate: step 7/9. The protein is Histidinol-phosphate aminotransferase of Acinetobacter baumannii (strain AB307-0294).